Here is a 105-residue protein sequence, read N- to C-terminus: Large ribosomal subunit protein uL24 (105 aa).

The protein belongs to the universal ribosomal protein uL24 family. As to quaternary structure, part of the 50S ribosomal subunit.

One of two assembly initiator proteins, it binds directly to the 5'-end of the 23S rRNA, where it nucleates assembly of the 50S subunit. In terms of biological role, one of the proteins that surrounds the polypeptide exit tunnel on the outside of the subunit. The sequence is that of Large ribosomal subunit protein uL24 from Marinomonas sp. (strain MWYL1).